A 155-amino-acid chain; its full sequence is Large ribosomal subunit protein uL22 (155 aa).

Belongs to the universal ribosomal protein uL22 family. As to quaternary structure, part of the 50S ribosomal subunit. Contacts the macrolide antibiotic tylosin in the polypeptide exit tunnel.

Functionally, this protein binds specifically to 23S rRNA. It makes multiple contacts with different domains of the 23S rRNA in the assembled 50S subunit and ribosome. Its function is as follows. Contacts all 6 domains of the 23S rRNA, helping stabilize their relative orientation. An extended beta-hairpin in the C-terminus forms part of the polypeptide exit tunnel, in which it helps forms a bend with protein L4, while most of the rest of the protein is located at the polypeptide exit tunnel on the outside of the subunit. The sequence is that of Large ribosomal subunit protein uL22 from Haloarcula marismortui (strain ATCC 43049 / DSM 3752 / JCM 8966 / VKM B-1809) (Halobacterium marismortui).